We begin with the raw amino-acid sequence, 195 residues long: HTH-type transcriptional regulator BetI (195 aa).

In terms of domain architecture, HTH tetR-type spans 8–68 (SIRRRQLIDA…ATMRDITSQL (61 aa)). Positions 31-50 (TIAQIARRAGVSTGIISHYF) form a DNA-binding region, H-T-H motif.

Its pathway is amine and polyamine biosynthesis; betaine biosynthesis via choline pathway [regulation]. Its function is as follows. Repressor involved in the biosynthesis of the osmoprotectant glycine betaine. It represses transcription of the choline transporter BetT and the genes of BetAB involved in the synthesis of glycine betaine. The chain is HTH-type transcriptional regulator BetI from Escherichia coli O8 (strain IAI1).